Here is a 144-residue protein sequence, read N- to C-terminus: 3-hydroxyacyl-[acyl-carrier-protein] dehydratase FabZ (144 aa).

His-48 is a catalytic residue.

This sequence belongs to the thioester dehydratase family. FabZ subfamily.

It localises to the cytoplasm. The enzyme catalyses a (3R)-hydroxyacyl-[ACP] = a (2E)-enoyl-[ACP] + H2O. Functionally, involved in unsaturated fatty acids biosynthesis. Catalyzes the dehydration of short chain beta-hydroxyacyl-ACPs and long chain saturated and unsaturated beta-hydroxyacyl-ACPs. This is 3-hydroxyacyl-[acyl-carrier-protein] dehydratase FabZ from Listeria innocua serovar 6a (strain ATCC BAA-680 / CLIP 11262).